We begin with the raw amino-acid sequence, 496 residues long: Pseudooxynicotine dehydrogenase (496 aa).

Residues 1–42 (MTKDGDEGSKSGVSRRKFLGSAAVGVATAGIASQLLTLSAPA) constitute a signal peptide (tat-type signal). The FAD site is built by Ala69, Glu88, Arg96, Trp113, Val285, Ser461, and Ile471.

This sequence belongs to the flavin monoamine oxidase family. Homodimer. It depends on FAD as a cofactor. Post-translationally, predicted to be exported by the Tat system. The position of the signal peptide cleavage has not been experimentally proven.

The protein resides in the periplasm. It carries out the reaction pseudooxynicotine + 2 Fe(III)-[cytochrome c] + H2O = 4-oxo-4-(pyridin-3-yl)butanal + methylamine + 2 Fe(II)-[cytochrome c] + 2 H(+). It participates in alkaloid degradation; nicotine degradation. Its activity is regulated as follows. Strongly inhibited by Na(2)MoO(4) and FeCl(3). Activity is nearly twice as high in the presence of Na(2)WO(4). Involved in nicotine degradation. Catalyzes the deamination of pseudooxynicotine to 3-succinoylsemialdehyde-pyridine. Functions as a dehydrogenase that uses the c-type cytochrome protein CycN as the physiological electron acceptor. O(2) is a poor electron acceptor. Pnao is oxidized by CycN 230 times faster than O(2) at equivalent oxidant concentrations. In Pseudomonas putida (strain DSM 28022 / S16), this protein is Pseudooxynicotine dehydrogenase.